A 537-amino-acid polypeptide reads, in one-letter code: ATP synthase subunit beta (537 aa).

The segment at 1–61 is disordered; that stretch reads MAKAATSKKE…SSPQKGGKKG (61 aa). The span at 7-18 shows a compositional bias: basic and acidic residues; it reads SKKEASKVEAKK. Residues 44-55 show a composition bias toward polar residues; the sequence is NSPSRTGSSSPQ. 209–216 contributes to the ATP binding site; it reads GGAGVGKT.

This sequence belongs to the ATPase alpha/beta chains family. As to quaternary structure, F-type ATPases have 2 components, CF(1) - the catalytic core - and CF(0) - the membrane proton channel. CF(1) has five subunits: alpha(3), beta(3), gamma(1), delta(1), epsilon(1). CF(0) has three main subunits: a(1), b(2) and c(9-12). The alpha and beta chains form an alternating ring which encloses part of the gamma chain. CF(1) is attached to CF(0) by a central stalk formed by the gamma and epsilon chains, while a peripheral stalk is formed by the delta and b chains.

It localises to the cell inner membrane. The catalysed reaction is ATP + H2O + 4 H(+)(in) = ADP + phosphate + 5 H(+)(out). Its function is as follows. Produces ATP from ADP in the presence of a proton gradient across the membrane. The catalytic sites are hosted primarily by the beta subunits. This is ATP synthase subunit beta from Bartonella bacilliformis (strain ATCC 35685 / KC583 / Herrer 020/F12,63).